A 398-amino-acid polypeptide reads, in one-letter code: Phospholipase C (398 aa).

Residues 1–28 (MKKKFLKGLCCAFVISITCLGASSKAYG) form the signal peptide. The Zn(2+) site is built by Trp29, His39, Asp84, His96, His154, Asp158, His164, His176, and Glu180. The 250-residue stretch at 29–278 (WDGKKDGTGT…YDVSKDLLPT (250 aa)) folds into the Zn-dependent PLC domain. The tract at residues 275-283 (LLPTENHKI) is linker. In terms of domain architecture, PLAT spans 284–398 (NGLMVVIKTA…IHGNEKYYIN (115 aa)). Positions 299, 300, 301, 321, 322, 324, 325, 326, and 364 each coordinate Ca(2+).

The protein belongs to the bacterial zinc-metallophospholipase C family. The cofactor is Ca(2+). Zn(2+) is required as a cofactor.

It localises to the secreted. It catalyses the reaction a 1,2-diacyl-sn-glycero-3-phosphocholine + H2O = phosphocholine + a 1,2-diacyl-sn-glycerol + H(+). Its function is as follows. Bacterial hemolysins are exotoxins that attack blood cell membranes and cause cell rupture. Binds to eukaryotic membranes where it hydrolyzes phosphatidylcholine, sphingomyelin and phosphatidylethanolamine. The diacylglycerol produced can activate both the arachidonic acid pathway, leading to modulation of the inflammatory response cascade and thrombosis, and protein kinase C, leading to activation of eukaryotic phospholipases and further membrane damage. This enzyme is hemolytic against horse erythrocytes. The chain is Phospholipase C (plc) from Clostridium novyi.